A 407-amino-acid chain; its full sequence is MSLKHHHRGLELSASKSFVSKKWTLFLCIGFFCAGILFSDRMWPEPESNVVSRDTVASDERLRLESEDCDSSKKGLKRESKDILGDVYKSPDAIQTLDKTISKLETELADARAAQESIMNGSPVSDDFKLPETVTKRKYLMVVGVNTAFSSRKRRDSVRATWMPPGEERKKLEEEKGIVMRFVIGHSSTPGGILDRAIQAEESKHGDFLRLDHVEGYLELSAKTKTYFTTAFAMWDADFYVKVDDDVHVNIATLGAELARYRMKPRVYIGCMKSGPVLAQKGVRYHEPEYWKFGEEGNKYFRHATGQLYAISRELASYISINQNVLHKYVNEDVSLGSWFLGLDVEHVDDRRLCCGTTDCEWKAQAGNICVASFDWSCSGICRSADRMKDVHRRCGEGEKALLAASF.

A helical; Signal-anchor for type II membrane protein membrane pass occupies residues 23 to 39 (WTLFLCIGFFCAGILFS).

Belongs to the glycosyltransferase 31 family. It depends on Mn(2+) as a cofactor.

The protein resides in the golgi apparatus membrane. It functions in the pathway protein modification; protein glycosylation. In terms of biological role, beta-1,3-galactosyltransferase that transfers galactose from UDP-galactose to substrates with a terminal glycosyl residue. This chain is Probable beta-1,3-galactosyltransferase 4 (B3GALT4), found in Arabidopsis thaliana (Mouse-ear cress).